Here is a 229-residue protein sequence, read N- to C-terminus: MLTWLNRNNLDFPPLEKALREPDGLLAAGGDLSADRLIKAYRHGCFPWFQEGQPILWWSPDPRTVLLPEELHISRSLGKVLRQSRYRVTFDTDFARVIKACAAPRSYANETWITGSMQDAYLELHRRGHAHSVEVWDQDELVGGLYGLAMGQLFFGESMFSRADNASKVGFATLVEHLTDWGFVLIDCQMPTQHLHSFGARSIPRQTFADYLARHLDQPTDADWLSRRV.

It belongs to the L/F-transferase family.

Its subcellular location is the cytoplasm. It catalyses the reaction N-terminal L-lysyl-[protein] + L-leucyl-tRNA(Leu) = N-terminal L-leucyl-L-lysyl-[protein] + tRNA(Leu) + H(+). It carries out the reaction N-terminal L-arginyl-[protein] + L-leucyl-tRNA(Leu) = N-terminal L-leucyl-L-arginyl-[protein] + tRNA(Leu) + H(+). The catalysed reaction is L-phenylalanyl-tRNA(Phe) + an N-terminal L-alpha-aminoacyl-[protein] = an N-terminal L-phenylalanyl-L-alpha-aminoacyl-[protein] + tRNA(Phe). Functionally, functions in the N-end rule pathway of protein degradation where it conjugates Leu, Phe and, less efficiently, Met from aminoacyl-tRNAs to the N-termini of proteins containing an N-terminal arginine or lysine. The chain is Leucyl/phenylalanyl-tRNA--protein transferase from Pseudomonas syringae pv. tomato (strain ATCC BAA-871 / DC3000).